The sequence spans 455 residues: Phosphomethylpyrimidine synthase (455 aa).

Residues Asn-80, Met-109, Tyr-139, His-175, 195 to 197 (SRG), 236 to 239 (DALR), and Glu-275 contribute to the substrate site. Zn(2+) is bound at residue His-279. Tyr-302 is a binding site for substrate. His-343 is a binding site for Zn(2+). Residues Cys-423, Cys-426, and Cys-431 each contribute to the [4Fe-4S] cluster site.

The protein belongs to the ThiC family. The cofactor is [4Fe-4S] cluster.

It catalyses the reaction 5-amino-1-(5-phospho-beta-D-ribosyl)imidazole + S-adenosyl-L-methionine = 4-amino-2-methyl-5-(phosphooxymethyl)pyrimidine + CO + 5'-deoxyadenosine + formate + L-methionine + 3 H(+). It participates in cofactor biosynthesis; thiamine diphosphate biosynthesis. Functionally, catalyzes the synthesis of the hydroxymethylpyrimidine phosphate (HMP-P) moiety of thiamine from aminoimidazole ribotide (AIR) in a radical S-adenosyl-L-methionine (SAM)-dependent reaction. This chain is Phosphomethylpyrimidine synthase, found in Synechococcus sp. (strain JA-3-3Ab) (Cyanobacteria bacterium Yellowstone A-Prime).